The sequence spans 318 residues: Serine protease 41 (318 aa).

Residues 1 to 19 (MGARGALLLALLLARAGLG) form the signal peptide. The propeptide occupies 20–54 (KPGELGALQAGPGAARRPGGGGREEACGHREIHAL). In terms of domain architecture, Peptidase S1 spans 55–297 (VAGGVESARG…YFHWIRRVMS (243 aa)). Cys-80 and Cys-96 form a disulfide bridge. Catalysis depends on charge relay system residues His-95 and Asp-147. 3 cysteine pairs are disulfide-bonded: Cys-181–Cys-255, Cys-215–Cys-234, and Cys-245–Cys-273. Asn-211 carries N-linked (GlcNAc...) asparagine glycosylation. Ser-249 acts as the Charge relay system in catalysis. The N-linked (GlcNAc...) asparagine glycan is linked to Asn-284. Ser-299 carries GPI-anchor amidated serine lipidation. Residues 300-318 (TPRPNPSQLLLLLALLWAP) constitute a propeptide, removed in mature form.

It belongs to the peptidase S1 family. Post-translationally, N-glycosylated.

The protein resides in the cell membrane. This is Serine protease 41 from Homo sapiens (Human).